The primary structure comprises 1058 residues: Bromodomain-containing protein 1 (1058 aa).

Positions 1–12 (MRRKGRCHRGSA) are enriched in basic residues. The segment at 1–26 (MRRKGRCHRGSAARHPSSPCSVKHSP) is disordered. Residues 31–80 (LTYAQAQRMVEIEIEGRLHRISIFDPLEIILEDDLTAQEMSECNSNKENS) form an interaction with KAT7/HBO1 and histones region. The disordered stretch occupies residues 92–116 (HKNNRVKKKNEALPSAHGTPASASA). At Ser-128 the chain carries Phosphoserine. The PHD-type 1 zinc finger occupies 214-264 (DAVCCICMDGECQNSNVILFCDMCNLAVHQECYGVPYIPEGQWLCRHCLQS). The C2HC pre-PHD-type zinc finger occupies 268–301 (PADCVLCPNKGGAFKKTDDDRWGHVVCALWIPEV). The PHD-type 2 zinc finger occupies 325–389 (LTCYLCKQKG…RKTAYCDVHT (65 aa)). N6-acetyllysine occurs at positions 368, 516, and 519. Glycyl lysine isopeptide (Lys-Gly) (interchain with G-Cter in SUMO2) cross-links involve residues Lys-554 and Lys-594. One can recognise a Bromo domain in the interval 562–666 (LRLTPLTVLL…DQGGVVLRQA (105 aa)). Disordered regions lie at residues 755–776 (LSQQ…EEDG) and 791–868 (LETL…DSSF). At Ser-803 the chain carries Phosphoserine. Residues 852-867 (SESSISSSNSPLCDSS) are compositionally biased toward low complexity. Lys-903 carries the post-translational modification N6-acetyllysine. At Arg-906 the chain carries Phosphoserine. The 84-residue stretch at 929–1012 (PLKVVWAKCS…KSKMVPLGID (84 aa)) folds into the PWWP domain. A phosphoserine mark is found at Ser-1052 and Ser-1055.

In terms of assembly, component of some HBO1 complex composed of KAT7/HBO1, MEAF6, ING4 and BRD1/BRPF2. Component of the MOZ/MORF complex composed at least of ING5, KAT6A, KAT6B, MEAF6 and one of BRPF1, BRD1/BRPF2 and BRPF3. Interacts (via PHD-type zinc finger domain) with unmodified histone H3. Interacts (via PWWP domain) with dimethylated and trimethylated 'Lys-79' on histone H3. As to expression, highly expressed in testis.

It is found in the nucleus. It localises to the chromosome. Its function is as follows. Scaffold subunit of various histone acetyltransferase (HAT) complexes, such as the MOZ/MORF and HBO1 complexes, that acts as a regulator of hematopoiesis. Plays a key role in HBO1 complex by directing KAT7/HBO1 specificity towards histone H3 'Lys-14' acetylation (H3K14ac), thereby promoting erythroid differentiation. The chain is Bromodomain-containing protein 1 from Homo sapiens (Human).